The following is a 477-amino-acid chain: Proline--tRNA ligase (477 aa).

The protein belongs to the class-II aminoacyl-tRNA synthetase family. ProS type 3 subfamily. As to quaternary structure, homodimer.

The protein localises to the cytoplasm. The catalysed reaction is tRNA(Pro) + L-proline + ATP = L-prolyl-tRNA(Pro) + AMP + diphosphate. Catalyzes the attachment of proline to tRNA(Pro) in a two-step reaction: proline is first activated by ATP to form Pro-AMP and then transferred to the acceptor end of tRNA(Pro). This is Proline--tRNA ligase from Methanocorpusculum labreanum (strain ATCC 43576 / DSM 4855 / Z).